Reading from the N-terminus, the 686-residue chain is MNRALLRAAWSSGTALRAPPSVSRAAVYRSAIHPVNRSFASVSCLQSEQPSSSSSAVPPALEPKDELTGNSTSESTPHIPWYLQEEAPLAESEQTFSRDQIPELPTNPPAILPALLDYVFKDIGLDALKLIDLRGLETPPALGANVIMIIGTARSVKHLNVSADRLCRWLRSTYKLSPYADGLLGRNELKIKLRRKARRARLASRSGTMFDEKDDGITTGWICVNAGVVEETPVKKDESYSFEGFGHTATGTRVVVQIFTEEKRAEVDLESLWQKALDRSEREKQRLSQVNPGAPSEEVRASNSINVSPSDREFGHASRFPTSPLFGQKRLLHTDHRPISQKFDRAAIHAEDTEEALGSQSSSLLRDHDHSDNEKKLRSMDALFDHLSNLSDVQARIELGEGPEDHDSTLFLRLFHDVLSVSSAEEKAIARLVLFCNAISRQHPGYTKRGLYAAFTECTCAGYLVSDDLAFSVVSALLSPRLAGTSSEDVAGQVPEADQELALLVLEHLSLRGTNVVNMRVFDMIYRAVAISPSTTAPDGANDAQTGNKSSLYRVTRLIDTLDLPFEPEQARSLMLSLFQHGDYDDFWKLWRKGPLNGSLRTAADYKMLFRLHADLGDELRARDCVSTWIPMMRREDNPIPLEGELLVDIKRCLMLADPDIVQKAAEGSTSNLARFWNACQMKMLR.

The transit peptide at 1–39 directs the protein to the mitochondrion; it reads MNRALLRAAWSSGTALRAPPSVSRAAVYRSAIHPVNRSF. Residues 48-59 are compositionally biased toward low complexity; the sequence is EQPSSSSSAVPP. 3 disordered regions span residues 48–77, 280–319, and 352–372; these read EQPS…ESTP, SERE…HASR, and DTEE…DHSD.

This sequence belongs to the ATP25 family.

The protein localises to the mitochondrion inner membrane. Functionally, probable mitochondrial mRNA stabilization factor. The polypeptide is ATPase synthesis protein 25, mitochondrial (atp25) (Aspergillus niger (strain ATCC MYA-4892 / CBS 513.88 / FGSC A1513)).